Here is a 207-residue protein sequence, read N- to C-terminus: uncharacterized protein (207 aa).

It to M.leprae ML1660.

This is an uncharacterized protein from Mycobacterium tuberculosis (strain CDC 1551 / Oshkosh).